Consider the following 164-residue polypeptide: UPF0304 protein YE1336 (164 aa).

The protein belongs to the UPF0304 family.

This Yersinia enterocolitica serotype O:8 / biotype 1B (strain NCTC 13174 / 8081) protein is UPF0304 protein YE1336.